The primary structure comprises 1026 residues: Multidrug resistance protein MdtC (1026 aa).

11 consecutive transmembrane segments (helical) span residues 15-35 (ILIA…LPVA), 333-353 (EVEE…FLFL), 360-380 (LIPA…MYLC), 387-407 (LSLM…IVVL), 431-451 (VGFT…PLLL), 463-483 (FAVT…TLTP), 528-548 (LVGV…IAIP), 853-873 (LILI…LYES), 897-917 (LFNA…IGIV), 953-973 (PIMM…LSGG), and 984-1004 (ITIV…TPVV).

This sequence belongs to the resistance-nodulation-cell division (RND) (TC 2.A.6) family. MdtC subfamily. Part of a tripartite efflux system composed of MdtA, MdtB and MdtC. MdtC forms a heteromultimer with MdtB.

It is found in the cell inner membrane. This is Multidrug resistance protein MdtC from Salmonella agona (strain SL483).